Consider the following 613-residue polypeptide: Zinc finger CCCH domain-containing protein 59 (613 aa).

The segment at asparagine 275 to arginine 296 is disordered. 2 C3H1-type zinc fingers span residues alanine 318–glutamate 346 and histidine 350–serine 378.

This chain is Zinc finger CCCH domain-containing protein 59, found in Oryza sativa subsp. japonica (Rice).